Reading from the N-terminus, the 389-residue chain is Succinate--CoA ligase [ADP-forming] subunit beta (389 aa).

The ATP-grasp domain maps to 9-244 (KQLFADYGLP…ETQEDPREVE (236 aa)). ATP is bound by residues K46, 53 to 55 (GRG), E99, G102, and E107. Positions 199 and 213 each coordinate Mg(2+). Residues N264 and 321–323 (GIV) contribute to the substrate site.

The protein belongs to the succinate/malate CoA ligase beta subunit family. As to quaternary structure, heterotetramer of two alpha and two beta subunits. It depends on Mg(2+) as a cofactor.

The catalysed reaction is succinate + ATP + CoA = succinyl-CoA + ADP + phosphate. It carries out the reaction GTP + succinate + CoA = succinyl-CoA + GDP + phosphate. The protein operates within carbohydrate metabolism; tricarboxylic acid cycle; succinate from succinyl-CoA (ligase route): step 1/1. Its function is as follows. Succinyl-CoA synthetase functions in the citric acid cycle (TCA), coupling the hydrolysis of succinyl-CoA to the synthesis of either ATP or GTP and thus represents the only step of substrate-level phosphorylation in the TCA. The beta subunit provides nucleotide specificity of the enzyme and binds the substrate succinate, while the binding sites for coenzyme A and phosphate are found in the alpha subunit. The chain is Succinate--CoA ligase [ADP-forming] subunit beta from Tolumonas auensis (strain DSM 9187 / NBRC 110442 / TA 4).